Reading from the N-terminus, the 573-residue chain is Heat shock protein 60A (573 aa).

Residues 1-57 constitute a mitochondrion transit peptide; sequence MFRLPVSLARSSISRQLAMRGYAKDVRFGPEVRAMMLQGVDVLADAVAVTMGPKGRN.

Belongs to the chaperonin (HSP60) family.

Its subcellular location is the mitochondrion matrix. Prevents misfolding and promotes the refolding and proper assembly of unfolded polypeptides generated under stress conditions. This is Heat shock protein 60A from Drosophila melanogaster (Fruit fly).